The primary structure comprises 472 residues: Lactate utilization protein B (472 aa).

2 consecutive 4Fe-4S ferredoxin-type domains span residues Gly304–Tyr334 and Tyr353–Leu382. Positions 313, 316, 319, 323, 366, 369, and 373 each coordinate [4Fe-4S] cluster.

This sequence belongs to the LutB/YkgF family.

In terms of biological role, is involved in L-lactate degradation and allows cells to grow with lactate as the sole carbon source. Has probably a role as an electron transporter during oxidation of L-lactate. This chain is Lactate utilization protein B, found in Anoxybacillus flavithermus (strain DSM 21510 / WK1).